The sequence spans 295 residues: Elongation factor Ts (295 aa).

The interval 79-82 is involved in Mg(2+) ion dislocation from EF-Tu; sequence TDFV.

This sequence belongs to the EF-Ts family.

It localises to the cytoplasm. In terms of biological role, associates with the EF-Tu.GDP complex and induces the exchange of GDP to GTP. It remains bound to the aminoacyl-tRNA.EF-Tu.GTP complex up to the GTP hydrolysis stage on the ribosome. The sequence is that of Elongation factor Ts from Bacillus cytotoxicus (strain DSM 22905 / CIP 110041 / 391-98 / NVH 391-98).